The sequence spans 228 residues: DNA repair and recombination protein RadB (228 aa).

It belongs to the eukaryotic RecA-like protein family. RadB subfamily.

Functionally, involved in DNA repair and in homologous recombination. May regulate the cleavage reactions of the branch-structured DNA. Has a very weak ATPase activity that is not stimulated by DNA. Binds DNA but does not promote DNA strands exchange. This chain is DNA repair and recombination protein RadB, found in Thermococcus sibiricus (strain DSM 12597 / MM 739).